A 348-amino-acid polypeptide reads, in one-letter code: Oxygen-dependent coproporphyrinogen-III oxidase (348 aa).

S104 provides a ligand contact to substrate. Positions 108 and 118 each coordinate a divalent metal cation. H118 functions as the Proton donor in the catalytic mechanism. 120-122 contributes to the substrate binding site; that stretch reads NYR. 2 residues coordinate a divalent metal cation: H152 and H182. Positions 272 to 307 are important for dimerization; it reads YAEFNLVWDRGTIFGLQTNGRTESILMSLPPLARWE.

Belongs to the aerobic coproporphyrinogen-III oxidase family. In terms of assembly, homodimer. A divalent metal cation serves as cofactor.

The protein resides in the cytoplasm. It catalyses the reaction coproporphyrinogen III + O2 + 2 H(+) = protoporphyrinogen IX + 2 CO2 + 2 H2O. The protein operates within porphyrin-containing compound metabolism; protoporphyrin-IX biosynthesis; protoporphyrinogen-IX from coproporphyrinogen-III (O2 route): step 1/1. Involved in the heme and chlorophyll biosynthesis. Catalyzes the aerobic oxidative decarboxylation of propionate groups of rings A and B of coproporphyrinogen-III to yield the vinyl groups in protoporphyrinogen-IX. The protein is Oxygen-dependent coproporphyrinogen-III oxidase of Prochlorococcus marinus (strain NATL1A).